The primary structure comprises 102 residues: NADH-quinone oxidoreductase subunit K (102 aa).

3 helical membrane passes run 6–26, 30–50, and 64–84; these read MHHG…GILV, LIFI…AFVV, and FIFI…LLLL.

It belongs to the complex I subunit 4L family. As to quaternary structure, NDH-1 is composed of 14 different subunits. Subunits NuoA, H, J, K, L, M, N constitute the membrane sector of the complex.

The protein localises to the cell inner membrane. It catalyses the reaction a quinone + NADH + 5 H(+)(in) = a quinol + NAD(+) + 4 H(+)(out). Functionally, NDH-1 shuttles electrons from NADH, via FMN and iron-sulfur (Fe-S) centers, to quinones in the respiratory chain. The immediate electron acceptor for the enzyme in this species is believed to be ubiquinone. Couples the redox reaction to proton translocation (for every two electrons transferred, four hydrogen ions are translocated across the cytoplasmic membrane), and thus conserves the redox energy in a proton gradient. The polypeptide is NADH-quinone oxidoreductase subunit K (Nitrosospira multiformis (strain ATCC 25196 / NCIMB 11849 / C 71)).